The primary structure comprises 241 residues: NH(3)-dependent NAD(+) synthetase (241 aa).

29–36 (GISGGIDS) lines the ATP pocket. Mg(2+) is bound at residue Asp-35. Position 110 (Arg-110) interacts with deamido-NAD(+). Glu-135 is a Mg(2+) binding site. Deamido-NAD(+) contacts are provided by Lys-143 and Asp-150. Residues Lys-159 and Ser-181 each contribute to the ATP site. Deamido-NAD(+) is bound at residue 226 to 227 (HK).

This sequence belongs to the NAD synthetase family. In terms of assembly, homodimer.

It catalyses the reaction deamido-NAD(+) + NH4(+) + ATP = AMP + diphosphate + NAD(+) + H(+). Its pathway is cofactor biosynthesis; NAD(+) biosynthesis; NAD(+) from deamido-NAD(+) (ammonia route): step 1/1. In terms of biological role, catalyzes the ATP-dependent amidation of deamido-NAD to form NAD. Uses ammonia as a nitrogen source. In Finegoldia magna (strain ATCC 29328 / DSM 20472 / WAL 2508) (Peptostreptococcus magnus), this protein is NH(3)-dependent NAD(+) synthetase.